The chain runs to 316 residues: Polyprenyl transferase dpchC (316 aa).

A run of 8 helical transmembrane segments spans residues 24 to 44 (PLFTTFAGLWSTLLAGGAKMA), 60 to 80 (ALCFVASYLFCGAGMVWNDWI), 105 to 125 (EAMVWMVLQAALSWGVLEVML), 154 to 174 (MLGIYPQYILAFTIAWPAVIG), 192 to 212 (CLPLCTMVFFWTIYLNTAYSY), 234 to 254 (IHLLLVALVSPILVCLPIYLF), 258 to 278 (SLWLWLSWMGVWTASLAQQLV), and 296 to 316 (FILGIWTILACVVQVFLTGSA).

Belongs to the UbiA prenyltransferase family. It depends on Mg(2+) as a cofactor.

Its subcellular location is the membrane. Its pathway is secondary metabolite biosynthesis; terpenoid biosynthesis. In terms of biological role, polyprenyl transferase; part of the gene cluster that mediates the biosynthesis of the diterpenoid pyrones higginsianins A and B. The first step of the pathway is the synthesis of the alpha-pyrone moiety by the polyketide synthase dpchA via condensation of one acetyl-CoA starter unit with 3 malonyl-CoA units and 2 methylations. The alpha-pyrone is then combined with geranylgeranyl pyrophosphate (GGPP) formed by the GGPP synthase dpchD through the action of the prenyltransferase dpchC to yield a linear alpha-pyrone diterpenoid. Subsequent steps in the diterpenoid pyrone biosynthetic pathway involve the decalin core formation, which is initiated by the epoxidation of the C10-C11 olefin by the FAD-dependent oxidoreductase dpchE, and is followed by a cyclization cascade catalyzed by the terpene cyclase dpchB. The short chain dehydrogenase/reductase dpchG then oxidizes the 8S hydroxy group to a ketone and the short chain dehydrogenase/reductase dpchH reduces the ketone to the 8R hydroxy group to yield higginsianin B. Finally, the FAD-dependent oxidoreductase dpchF converts higginsianin B into higginsianin A. The polypeptide is Polyprenyl transferase dpchC (Colletotrichum higginsianum (strain IMI 349063) (Crucifer anthracnose fungus)).